Consider the following 363-residue polypeptide: UDP-N-acetylglucosamine--N-acetylmuramyl-(pentapeptide) pyrophosphoryl-undecaprenol N-acetylglucosamine transferase (363 aa).

UDP-N-acetyl-alpha-D-glucosamine contacts are provided by residues 10 to 12 (TGG), asparagine 124, serine 195, isoleucine 250, and glutamine 295.

It belongs to the glycosyltransferase 28 family. MurG subfamily.

The protein resides in the cell membrane. The catalysed reaction is di-trans,octa-cis-undecaprenyl diphospho-N-acetyl-alpha-D-muramoyl-L-alanyl-D-glutamyl-meso-2,6-diaminopimeloyl-D-alanyl-D-alanine + UDP-N-acetyl-alpha-D-glucosamine = di-trans,octa-cis-undecaprenyl diphospho-[N-acetyl-alpha-D-glucosaminyl-(1-&gt;4)]-N-acetyl-alpha-D-muramoyl-L-alanyl-D-glutamyl-meso-2,6-diaminopimeloyl-D-alanyl-D-alanine + UDP + H(+). It participates in cell wall biogenesis; peptidoglycan biosynthesis. Its function is as follows. Cell wall formation. Catalyzes the transfer of a GlcNAc subunit on undecaprenyl-pyrophosphoryl-MurNAc-pentapeptide (lipid intermediate I) to form undecaprenyl-pyrophosphoryl-MurNAc-(pentapeptide)GlcNAc (lipid intermediate II). In Listeria monocytogenes serotype 4b (strain CLIP80459), this protein is UDP-N-acetylglucosamine--N-acetylmuramyl-(pentapeptide) pyrophosphoryl-undecaprenol N-acetylglucosamine transferase.